Reading from the N-terminus, the 70-residue chain is MKARELKELRSSNPQDLTVKLGDLKAELFNLRFQLATGQLENPMRIREVKKSIAQIKTILREDEMRALEQ.

Belongs to the universal ribosomal protein uL29 family.

In Clostridium botulinum (strain Alaska E43 / Type E3), this protein is Large ribosomal subunit protein uL29.